Reading from the N-terminus, the 387-residue chain is Succinate--CoA ligase [ADP-forming] subunit beta (387 aa).

The ATP-grasp domain occupies 9–245 (KDLLESYGLK…KSQENAKELK (237 aa)). Residues Lys46, 53–55 (GRG), Glu100, Tyr103, and Glu108 each bind ATP. Mg(2+)-binding residues include Asn200 and Asp214. Substrate is bound by residues Asn265 and 322-324 (GIV).

Belongs to the succinate/malate CoA ligase beta subunit family. In terms of assembly, heterotetramer of two alpha and two beta subunits. Mg(2+) serves as cofactor.

The catalysed reaction is succinate + ATP + CoA = succinyl-CoA + ADP + phosphate. It carries out the reaction GTP + succinate + CoA = succinyl-CoA + GDP + phosphate. The protein operates within carbohydrate metabolism; tricarboxylic acid cycle; succinate from succinyl-CoA (ligase route): step 1/1. Succinyl-CoA synthetase functions in the citric acid cycle (TCA), coupling the hydrolysis of succinyl-CoA to the synthesis of either ATP or GTP and thus represents the only step of substrate-level phosphorylation in the TCA. The beta subunit provides nucleotide specificity of the enzyme and binds the substrate succinate, while the binding sites for coenzyme A and phosphate are found in the alpha subunit. This chain is Succinate--CoA ligase [ADP-forming] subunit beta, found in Francisella tularensis subsp. mediasiatica (strain FSC147).